The chain runs to 627 residues: MTRIQDDLFATVNAEWLENAEIPADKPRISAFDELVLKNEKNLAKDLADLSQNLPTDNPELLEAIKFYNKAGDWQAREKADFSAVKNELAKVETLNTFEDFKNNLTQLVFHSQAPLPFSFSVEPDMKDAIHYSLGFSGPGLILPDTTYYNDEHPRKKELLDFWAKNTSEILKTFDVENAEEIAKSALKFDALLVPSANTSEEWAKYAELYHPISTDSFVSKVKNLDLKSLIKDLVKTEPDKVIVYEDRFYESFDSLINEENWSLIKAWMLTKIARGATSFFNEDLRILGGAYGRFLSNVQEARSQEKHQLDLTESYFSQVIGLFYGKKYFGEAGKADVKRMVTAMIKVYQARLSKNEWLSQETAEKAIEKLDAITPFIGFPDKLPEIYSRLKTTSGSLYEDALKFDEILTARTFEKFSEDVDKTSWHMPAHMVNAYYSPDSNTIVFPAAILQAPFYSLEQSSSQNYGGIGTVIAHEISHAFDNNGAQFDKEGNLNKWWLDEDYEAFEEKQKEMIALFDGVETEAGPANGKLIVSENIADQGGITAALTAAKDEKDVDLKAFFSQWAKIWRMKASKEFQQMLLSMDFHAPAKLRANIPPTNLEEFYDTFDVKETDKMYRAPENRLKIW.

Residues 1–627 (MTRIQDDLFA…RAPENRLKIW (627 aa)) enclose the Peptidase M13 domain. His475 is a binding site for Zn(2+). Glu476 is a catalytic residue. His479 and Glu535 together coordinate Zn(2+). Catalysis depends on Asp539, which acts as the Proton donor.

Belongs to the peptidase M13 family. Monomer. Requires Zn(2+) as cofactor.

The protein localises to the cytoplasm. In terms of biological role, endopeptidase with broad substrate specificity for several oligopeptides. The sequence is that of Neutral endopeptidase (pepO) from Lactococcus lactis subsp. cremoris (Streptococcus cremoris).